A 395-amino-acid polypeptide reads, in one-letter code: GPI-anchor transamidase (395 aa).

Positions 1–27 (MAVTDSLSRAASTLAAVLLLSFGSVAA) are cleaved as a signal peptide. At 28 to 368 (SHIEDQAEQF…PKLKDWHPPG (341 aa)) the chain is on the lumenal side. Positions 79, 82, 118, and 120 each coordinate Ca(2+). H164 (proton donor) is an active-site residue. C206 functions as the Nucleophile; acyl-thioester intermediate in the catalytic mechanism. A protein contacts are provided by C206, S232, and S234. Residues 231–236 (DSLSHQ) form an autoinhibitory loop region. A disulfide bridge connects residues C275 and C280. The chain crosses the membrane as a helical span at residues 369–385 (GFILGLWALIIMVFFKT). Residues 386–395 (YGIKHMKFIF) are Cytoplasmic-facing.

The protein belongs to the peptidase C13 family. In terms of assembly, heteropentamer. Part of the GPI-anchor transamidase complex, consisting of PIGK, PIGT, PIGS, PIGU and GAA1. Interacts with GPAA1. Interacts with PIGT; this interaction, via a disulfide link, stabilizes the expression of GAA1 and PIGK and links them to PIGS. In terms of processing, the disulfide bond between PIGK/GPI8 and PIGT is important for normal enzyme activity.

The protein localises to the endoplasmic reticulum membrane. It participates in glycolipid biosynthesis; glycosylphosphatidylinositol-anchor biosynthesis. In the absence of proproteins substrates, exists in an inactive state with a disrupted catalytic site by an autoinhibitory loop. The binding of proprotein substrates, particularly the CSP region, to GPI-T triggers concerted conformational changes that alleviate the inhibition by the autoinhibitory loop. Meanwhile, proprotein residues near the omega- site induce the formation of a catalytic cleft for catalysis, following which the products are released and GPI-T reverts to the inactive state. Its function is as follows. Catalytic subunit of the glycosylphosphatidylinositol-anchor (GPI-anchor) transamidase (GPI-T) complex that catalyzes the formation of the linkage between a proprotein and a GPI-anchor and participates in GPI anchored protein biosynthesis. Recognizes diverse proproteins at a C-terminal signal peptide (CSP) region that lacks consensus sequence and replaces it with a GPI-anchor via a transamidation reaction. Transamidation catalysis reaction follows a two-phase mechanism. In the acyl-enzyme phase, the carbonyl group of the proproteins's omega-site undergoes a nucleophilic attack forming an enzyme-substrate thioester bond. Followed by a general acid catalysis that allows CSP releasing, regenerating the carbonyl, and forming the acyl-enzyme intermediate. In the GPI-anchor attachment phase, the amino group of the GPI-anchor's ethanolamine phosphate, the one on third mannose (EtNP3), mediates a nucleophilic attack on the carbonyl of the acyl-enzyme intermediate, replacing the CSP, allowing GPI-anchor attachment to the omega-residue, therefore forming the product and freeing the enzyme. The chain is GPI-anchor transamidase from Pongo abelii (Sumatran orangutan).